The following is a 95-amino-acid chain: Aspartyl/glutamyl-tRNA(Asn/Gln) amidotransferase subunit C (95 aa).

It belongs to the GatC family. As to quaternary structure, heterotrimer of A, B and C subunits.

It catalyses the reaction L-glutamyl-tRNA(Gln) + L-glutamine + ATP + H2O = L-glutaminyl-tRNA(Gln) + L-glutamate + ADP + phosphate + H(+). It carries out the reaction L-aspartyl-tRNA(Asn) + L-glutamine + ATP + H2O = L-asparaginyl-tRNA(Asn) + L-glutamate + ADP + phosphate + 2 H(+). In terms of biological role, allows the formation of correctly charged Asn-tRNA(Asn) or Gln-tRNA(Gln) through the transamidation of misacylated Asp-tRNA(Asn) or Glu-tRNA(Gln) in organisms which lack either or both of asparaginyl-tRNA or glutaminyl-tRNA synthetases. The reaction takes place in the presence of glutamine and ATP through an activated phospho-Asp-tRNA(Asn) or phospho-Glu-tRNA(Gln). In Nitratidesulfovibrio vulgaris (strain DSM 19637 / Miyazaki F) (Desulfovibrio vulgaris), this protein is Aspartyl/glutamyl-tRNA(Asn/Gln) amidotransferase subunit C.